Reading from the N-terminus, the 254-residue chain is Proteasome subunit alpha (254 aa).

Residues 231–254 (ESGAASADGEAETEAETDSGSDEE) form a disordered region. Residues 239-254 (GEAETEAETDSGSDEE) are compositionally biased toward acidic residues.

It belongs to the peptidase T1A family. In terms of assembly, the 20S proteasome core is composed of 14 alpha and 14 beta subunits that assemble into four stacked heptameric rings, resulting in a barrel-shaped structure. The two inner rings, each composed of seven catalytic beta subunits, are sandwiched by two outer rings, each composed of seven alpha subunits. The catalytic chamber with the active sites is on the inside of the barrel. Has probably a gated structure, the ends of the cylinder being occluded by the N-termini of the alpha-subunits. Is likely capped by the proteasome-associated ATPase, ARC. In terms of processing, the N-terminus is blocked.

The protein localises to the cytoplasm. It participates in protein degradation; proteasomal Pup-dependent pathway. The formation of the proteasomal ATPase ARC-20S proteasome complex, likely via the docking of the C-termini of ARC into the intersubunit pockets in the alpha-rings, may trigger opening of the gate for substrate entry. Interconversion between the open-gate and close-gate conformations leads to a dynamic regulation of the 20S proteasome proteolysis activity. Peptidolytic activity is completely inhibited by lactacystin, and to a lesser extent, by N-acetyl-Leu-Leu-norleucinal (Ac-LLnL) and benzoyloxycarbonyl-Leu-Leu-Leu-vinylsulfone (Z-LLL-VS) in vitro. Functionally, component of the proteasome core, a large protease complex with broad specificity involved in protein degradation. The S.coelicolor proteasome is able to cleave oligopeptides after hydrophobic residues, but not after basic or acidic residues, thus displaying chymotrypsin-like activity but not trypsin-like activity. In Streptomyces coelicolor (strain ATCC BAA-471 / A3(2) / M145), this protein is Proteasome subunit alpha.